Consider the following 433-residue polypeptide: MSISIETLEGLQRRVTLTVNANKIEAAYKEQLKDYAKNAHVDGFRKGKVPRSIIEQRFGLAARQEVLSEEMQRTFFDAVISEKINLAGRPTFTPNNYQLGQDFSFTATFEVFPEVELKGLENIEVEKPVVEITTADIDKMIEVLRKQQATWAESDAAATANDRVIIDFVGYIDGAEFEGGKATEFTLNMGQGSMIPGFEEGIVGHKAGEQFDIDVTFPEEYHAENLKGKAAKFAITLNKVENMILPELTEEFVKKFGTAKTVEELRAEIEKNMQRELKNAVTARIKNQVINGLVTQNDIEVPVAAIAEEIEVLRRQAVQRFGGKPEMAAQLPSELFEADAKRRVQVGLLLSTVIASNEIKVDEQRVQQTIADIASAYEQPAEVIAHYAKNQRLTDNIRNVVLEEQAVEIVLEKAKVTEKTHSFDEIMAQQAQG.

Positions 161-246 constitute a PPIase FKBP-type domain; it reads NDRVIIDFVG…LNKVENMILP (86 aa).

Belongs to the FKBP-type PPIase family. Tig subfamily.

Its subcellular location is the cytoplasm. It carries out the reaction [protein]-peptidylproline (omega=180) = [protein]-peptidylproline (omega=0). Involved in protein export. Acts as a chaperone by maintaining the newly synthesized protein in an open conformation. Functions as a peptidyl-prolyl cis-trans isomerase. This Haemophilus ducreyi (strain 35000HP / ATCC 700724) protein is Trigger factor.